A 328-amino-acid polypeptide reads, in one-letter code: Acyl-CoA wax alcohol acyltransferase 1 (328 aa).

The next 2 helical transmembrane spans lie at 12-32 and 34-53; these read SLML…LQPL and VYLL…AWLF.

The protein belongs to the diacylglycerol acyltransferase family. Predominantly expressed in skin, where it is limited to the sebaceous gland. Expressed in more mature, centrally located cells just before their rupture and sebum release. Also expressed in all tissues except spleen. Expressed at higher level in thymus, prostate and testis.

The protein resides in the endoplasmic reticulum membrane. It catalyses the reaction a long chain fatty alcohol + a fatty acyl-CoA = a wax ester + CoA. The catalysed reaction is 1,2-di-(9Z-octadecenoyl)-sn-glycerol + (9Z)-octadecenoyl-CoA = 1,2,3-tri-(9Z-octadecenoyl)-glycerol + CoA. The enzyme catalyses hexadecan-1-ol + (9Z)-octadecenoyl-CoA = hexadecanyl (9Z)-octadecenoate + CoA. It carries out the reaction decan-1-ol + (9Z)-octadecenoyl-CoA = 1-O-decyl-(9Z)-octadecenoate + CoA. It catalyses the reaction (9Z)-hexadecen-1-ol + (9Z)-octadecenoyl-CoA = 1-O-(9Z)-hexadecenyl (9Z)-octadecenoate + CoA. The catalysed reaction is octadecan-1-ol + (9Z)-octadecenoyl-CoA = 1-O-octadecyl (9Z)-octadecenoate + CoA. The enzyme catalyses (9Z)-octadecen-1-ol + (9Z)-octadecenoyl-CoA = 1-O-(9Z)-octadecenyl (9Z)-octadecenoate + CoA. It carries out the reaction hexadecan-1-ol + hexadecanoyl-CoA = hexadecanyl hexadecanoate + CoA. It catalyses the reaction hexadecan-1-ol + (9Z)-hexadecenoyl-CoA = 1-O-hexadecyl (9Z)-hexadecenoate + CoA. The catalysed reaction is hexadecan-1-ol + octadecanoyl-CoA = hexadecanyl octadecanoate + CoA. The enzyme catalyses eicosan-1-ol + (9Z)-octadecenoyl-CoA = 1-O-eicosanyl (9Z)-octadecenoate + CoA. In terms of biological role, acyltransferase that catalyzes the formation of ester bonds between fatty alcohols and fatty acyl-CoAs to form wax monoesters. Shows a strong preference for decyl alcohol (C10), with less activity towards C16 and C18 alcohols. Shows a strong preference for saturated acyl-CoAs. The chain is Acyl-CoA wax alcohol acyltransferase 1 (AWAT1) from Homo sapiens (Human).